The chain runs to 292 residues: RWD domain-containing protein 2A (292 aa).

An RWD domain is found at 14 to 134 (LEMEMLFSMF…QWLQDNSASY (121 aa)).

The sequence is that of RWD domain-containing protein 2A (RWDD2A) from Homo sapiens (Human).